The following is a 266-amino-acid chain: Undecaprenyl-diphosphatase (266 aa).

Transmembrane regions (helical) follow at residues 1–21 (MVVI…SSTG), 43–63 (FLII…WKDI), 81–101 (LKII…DDII), 109–129 (VLIV…IEVV), 159–179 (LAMI…LLLG), 183–203 (PLAA…ATAL), 219–239 (YLAL…KWFM), and 246–266 (SFAS…VLLY).

It belongs to the UppP family.

The protein localises to the cell inner membrane. The enzyme catalyses di-trans,octa-cis-undecaprenyl diphosphate + H2O = di-trans,octa-cis-undecaprenyl phosphate + phosphate + H(+). Its function is as follows. Catalyzes the dephosphorylation of undecaprenyl diphosphate (UPP). Confers resistance to bacitracin. The sequence is that of Undecaprenyl-diphosphatase from Fusobacterium nucleatum subsp. nucleatum (strain ATCC 25586 / DSM 15643 / BCRC 10681 / CIP 101130 / JCM 8532 / KCTC 2640 / LMG 13131 / VPI 4355).